The primary structure comprises 279 residues: uncharacterized protein (279 aa).

The segment at 1–28 (MGLFGGGNSKSTSNQTTNNENTNIATQG) is disordered. The span at 9–23 (SKSTSNQTTNNENTN) shows a compositional bias: low complexity. A helical transmembrane segment spans residues 256–273 (KTLMIGIVAVSAAVGLYA).

The protein resides in the host membrane. This is an uncharacterized protein from Pseudoalteromonas espejiana (Bacteriophage PM2).